The following is a 135-amino-acid chain: D-ribose pyranase (135 aa).

His20 serves as the catalytic Proton donor. Substrate-binding positions include Asp28, His102, and 124 to 126; that span reads YSN.

This sequence belongs to the RbsD / FucU family. RbsD subfamily. In terms of assembly, homodecamer.

The protein resides in the cytoplasm. It carries out the reaction beta-D-ribopyranose = beta-D-ribofuranose. It participates in carbohydrate metabolism; D-ribose degradation; D-ribose 5-phosphate from beta-D-ribopyranose: step 1/2. In terms of biological role, catalyzes the interconversion of beta-pyran and beta-furan forms of D-ribose. The protein is D-ribose pyranase of Thermotoga petrophila (strain ATCC BAA-488 / DSM 13995 / JCM 10881 / RKU-1).